A 108-amino-acid chain; its full sequence is UPF0145 protein Npun_F4817 (108 aa).

The protein belongs to the UPF0145 family.

This Nostoc punctiforme (strain ATCC 29133 / PCC 73102) protein is UPF0145 protein Npun_F4817.